We begin with the raw amino-acid sequence, 521 residues long: Vang-like protein 2-A (521 aa).

A disordered region spans residues 1-81 (MDNDSQYSGY…TTVVTGTSEH (81 aa)). Topologically, residues 1–108 (MDNDSQYSGY…AKLDCSRHLG (108 aa)) are cytoplasmic. Residues 15–33 (GHSRSSRKHRDRRERHRSK) show a composition bias toward basic residues. A compositionally biased stretch (basic and acidic residues) spans 57–67 (ESTRGEDRDDN). Residues 69–81 (GETTTVVTGTSEH) show a composition bias toward low complexity. Residues 109 to 129 (VVIGGALALLSFLTPIAFMLL) traverse the membrane as a helical segment. The Extracellular portion of the chain corresponds to 130-147 (PQILWREDLEQCGTACEG). Residues 148-168 (LFISVAFKLLILLLGSWALFF) form a helical membrane-spanning segment. Residues 169 to 178 (RRPKAFFPRV) are Cytoplasmic-facing. Residues 179-199 (FVFRALLMVLVFLLVVSYWLF) form a helical membrane-spanning segment. The Extracellular segment spans residues 200-218 (YGVRILESRDKNYQGIVQY). A helical transmembrane segment spans residues 219-239 (AVSLVDALLFVHYLAVVLLEL). Residues 240 to 521 (RQLQPQFTIK…VMRLQSETSV (282 aa)) are Cytoplasmic-facing. The PDZ-binding signature appears at 518–521 (ETSV).

It belongs to the Vang family. In terms of assembly, interacts with dvl/dsh. Interacts with prickle3. In terms of tissue distribution, during gastrulation, broadly expressed throughout the marginal zone and animal cap region. From the neurula stages, expression becomes concentrated in neural tissues, in the neural plate and neural tube.

The protein resides in the cell membrane. Has a role in non-canonical Wnt/planar cell polarity (PCP) signaling; can recruit dvl/dsh and prickle from the cytoplasm to the plasma membrane. Acts in a PCP complex to regulate the polarized assembly of fibronectrin on the surface of the mesoderm during gastrulation. Regulates convergent extension cell movements in both dorsal mesoderm and neural tissue during gastrulation, without affecting cell fate. Regulates neural fold closure during neurulation. May be required for cell surface localization of fzd3 and fzd6 in the inner ear. The sequence is that of Vang-like protein 2-A (vangl2-a) from Xenopus laevis (African clawed frog).